A 471-amino-acid polypeptide reads, in one-letter code: Glutamate--tRNA ligase (471 aa).

A 'HIGH' region motif is present at residues Pro9–Gly19. The Zn(2+) site is built by Cys98, Cys100, Cys125, and Asp127. The 'KMSKS' region signature appears at Lys237–Arg241. Lys240 serves as a coordination point for ATP.

The protein belongs to the class-I aminoacyl-tRNA synthetase family. Glutamate--tRNA ligase type 1 subfamily. Monomer. Requires Zn(2+) as cofactor.

The protein resides in the cytoplasm. The enzyme catalyses tRNA(Glu) + L-glutamate + ATP = L-glutamyl-tRNA(Glu) + AMP + diphosphate. Catalyzes the attachment of glutamate to tRNA(Glu) in a two-step reaction: glutamate is first activated by ATP to form Glu-AMP and then transferred to the acceptor end of tRNA(Glu). The protein is Glutamate--tRNA ligase of Yersinia pestis.